Consider the following 594-residue polypeptide: UvrABC system protein C (594 aa).

Positions 15-92 (DKPGCYQMKN…IQKFQPYYNI (78 aa)) constitute a GIY-YIG domain. A UVR domain is found at 197 to 232 (AKIKQSLQTKMQKASEAMEFERAADIRDQIHYIEVT).

Belongs to the UvrC family. Interacts with UvrB in an incision complex.

The protein localises to the cytoplasm. The UvrABC repair system catalyzes the recognition and processing of DNA lesions. UvrC both incises the 5' and 3' sides of the lesion. The N-terminal half is responsible for the 3' incision and the C-terminal half is responsible for the 5' incision. The polypeptide is UvrABC system protein C (Pediococcus pentosaceus (strain ATCC 25745 / CCUG 21536 / LMG 10740 / 183-1w)).